Consider the following 383-residue polypeptide: Homoserine O-succinyltransferase (383 aa).

In terms of domain architecture, AB hydrolase-1 spans 51-360 (NAILLCHALS…EAEHGHDSFL (310 aa)). Residue Ser157 is the Nucleophile of the active site. Residue Arg227 participates in substrate binding. Catalysis depends on residues Asp323 and His356. Substrate is bound at residue Asp357.

This sequence belongs to the AB hydrolase superfamily. MetX family. Homodimer.

It localises to the cytoplasm. It carries out the reaction L-homoserine + succinyl-CoA = O-succinyl-L-homoserine + CoA. Its pathway is amino-acid biosynthesis; L-methionine biosynthesis via de novo pathway; O-succinyl-L-homoserine from L-homoserine: step 1/1. Its function is as follows. Transfers a succinyl group from succinyl-CoA to L-homoserine, forming succinyl-L-homoserine. In Acidithiobacillus ferrooxidans (strain ATCC 23270 / DSM 14882 / CIP 104768 / NCIMB 8455) (Ferrobacillus ferrooxidans (strain ATCC 23270)), this protein is Homoserine O-succinyltransferase.